A 360-amino-acid polypeptide reads, in one-letter code: Diacylglycerol O-acyltransferase 3 (360 aa).

The segment at Lys-153–Lys-182 is disordered. [2Fe-2S] cluster is bound by residues Cys-265, Cys-270, Cys-298, and Cys-302.

The protein belongs to the diacylglycerol acyltransferase family. [2Fe-2S] cluster is required as a cofactor.

It catalyses the reaction an acyl-CoA + a 1,2-diacyl-sn-glycerol = a triacyl-sn-glycerol + CoA. Its pathway is glycerolipid metabolism; triacylglycerol biosynthesis. Involved in triacylglycerol (TAG) biosynthesis. Catalyzes the acylation of the sn-3 hydroxy group of sn-1,2-diacylglycerol using acyl-CoA. May preferentially use linolenoyl-CoA as substrate and to a lesser extent linoleoyl-CoA. May contribute to the active recycling of linoleate and linolenate into TAG when seed oil breakdown is blocked. In Arabidopsis thaliana (Mouse-ear cress), this protein is Diacylglycerol O-acyltransferase 3.